Reading from the N-terminus, the 283-residue chain is Putative transcription factor kapC (283 aa).

Positions M1 to H10 are enriched in pro residues. Positions M1–Q121 are disordered. Residues H26–A42 are compositionally biased toward low complexity. Polar residues predominate over residues Q55–I67. The bZIP domain maps to P102–L165. Residues L103–Y126 form a basic motif region. Low complexity predominate over residues R108 to A118. The segment at L130–L161 is leucine-zipper. Residues N178–S283 are disordered.

The protein belongs to the bZIP family.

It localises to the nucleus. Functionally, putative transcription factor. The sequence is that of Putative transcription factor kapC (kapC) from Aspergillus niger (strain ATCC MYA-4892 / CBS 513.88 / FGSC A1513).